The primary structure comprises 294 residues: Tyrosine-protein phosphatase (294 aa).

The signal sequence occupies residues Met-1 to Ala-24. The Phosphocysteine intermediate role is filled by Cys-182. Basic and acidic residues-rich tracts occupy residues Gln-221 to His-231 and Pro-238 to His-247. The disordered stretch occupies residues Gln-221–Ala-252.

It belongs to the protein-tyrosine phosphatase family. In terms of assembly, monomer.

The enzyme catalyses O-phospho-L-tyrosyl-[protein] + H2O = L-tyrosyl-[protein] + phosphate. In Nostoc commune, this protein is Tyrosine-protein phosphatase (iphP).